A 445-amino-acid polypeptide reads, in one-letter code: Phosphoglucosamine mutase (445 aa).

The active-site Phosphoserine intermediate is the serine 99. Mg(2+)-binding residues include serine 99, aspartate 242, aspartate 244, and aspartate 246. At serine 99 the chain carries Phosphoserine.

The protein belongs to the phosphohexose mutase family. Requires Mg(2+) as cofactor. Post-translationally, activated by phosphorylation.

The enzyme catalyses alpha-D-glucosamine 1-phosphate = D-glucosamine 6-phosphate. Its function is as follows. Catalyzes the conversion of glucosamine-6-phosphate to glucosamine-1-phosphate. This is Phosphoglucosamine mutase from Helicobacter pylori (strain HPAG1).